A 272-amino-acid polypeptide reads, in one-letter code: Shikimate dehydrogenase (NADP(+)) (272 aa).

Shikimate contacts are provided by residues 19 to 21 (SLS) and T66. The active-site Proton acceptor is K70. NADP(+) is bound at residue E82. Shikimate contacts are provided by N91 and D106. Residues 129–133 (GAGGA), 151–156 (NRTPEK), and I214 each bind NADP(+). Y216 is a shikimate binding site. G237 serves as a coordination point for NADP(+).

It belongs to the shikimate dehydrogenase family. In terms of assembly, homodimer.

It catalyses the reaction shikimate + NADP(+) = 3-dehydroshikimate + NADPH + H(+). The protein operates within metabolic intermediate biosynthesis; chorismate biosynthesis; chorismate from D-erythrose 4-phosphate and phosphoenolpyruvate: step 4/7. Involved in the biosynthesis of the chorismate, which leads to the biosynthesis of aromatic amino acids. Catalyzes the reversible NADPH linked reduction of 3-dehydroshikimate (DHSA) to yield shikimate (SA). The polypeptide is Shikimate dehydrogenase (NADP(+)) (Thermococcus kodakarensis (strain ATCC BAA-918 / JCM 12380 / KOD1) (Pyrococcus kodakaraensis (strain KOD1))).